Here is a 357-residue protein sequence, read N- to C-terminus: Mannonate dehydratase (357 aa).

The protein belongs to the mannonate dehydratase family. Fe(2+) serves as cofactor. It depends on Mn(2+) as a cofactor.

The catalysed reaction is D-mannonate = 2-dehydro-3-deoxy-D-gluconate + H2O. It functions in the pathway carbohydrate metabolism; pentose and glucuronate interconversion. Functionally, catalyzes the dehydration of D-mannonate. This is Mannonate dehydratase from Enterococcus faecalis (strain ATCC 700802 / V583).